We begin with the raw amino-acid sequence, 54 residues long: uncharacterized protein (54 aa).

A helical membrane pass occupies residues 6–26 (ILIYLLIFVAGIVIGKIRINV).

It localises to the host membrane. This is an uncharacterized protein from Acidianus convivator (ABV).